The following is a 149-amino-acid chain: Large ribosomal subunit protein bL9 (149 aa).

It belongs to the bacterial ribosomal protein bL9 family.

Binds to the 23S rRNA. The protein is Large ribosomal subunit protein bL9 of Xylella fastidiosa (strain 9a5c).